The chain runs to 728 residues: MEGEGVRNFKELRAKFQNLDAPPLPGPIKFPAGVSPKGDIGGTQSTQILANGKPLSSNHKQRTPYCSSSESQPLQPQKIKLAQKSEIPKCSNSPGPLGKSTVCSATSSQKASLLLEVTQSNVEIITKEKVMVANSFRNKLWNWEKVSSQKSEMSSALLLANYGSKAIHLEGQKGMGLTPEEPRKKLETKGAQTLPSQKHVVAPKILHNVSEDPSFVISQHIRKSWENPPPERSPASSPCQPIYECELASQAPEKQPDVRHHHLPKTKPLPSIDSLGPPPPKPSRPPIVNLQAFQRQPAAVPKTQGEVTVEEGSLSPERLFNAEFEEPHNYEATISYLRHSGNSINLCTAKEIADPTYEVGIEELQKPGKNFPYPEPSAKHEDKKMKEKQPCELKPKNTEKEPYSNHVFKVDACEGTPEKIQMTNVHTGRRNMLAGKQEAMIDIIQTNPCPEGPKLARHSQGHCGHLEVLESTKETPDLGVSKTSSISEEIYDDVEYSRKEVPKLNYSSSLASSSEENRELYEDVYKTKNNYPKIDLDGKEALKRLQQFFKKEKDRFKIKKTKSKENLSAFSILLPDLELKSQEVIIYDDVDLSEKESKDEDKLKMWKPKFLTPKEKKEKNGAEESESFSPRNFFKTKKQNLEKNRMKREEKLFRERFKYDKEIIVINTAVACSNNSRNGIFDLPISPGEELEVIDTTEQNLVICRNSKGKYGYVLIEHLDFKHQSWSP.

3 disordered regions span residues 17 to 76, 250 to 287, and 367 to 390; these read QNLD…PLQP, QAPEKQPDVRHHHLPKTKPLPSIDSLGPPPPKPSRPPI, and PGKNFPYPEPSAKHEDKKMKEKQP. The span at 42–75 shows a compositional bias: polar residues; that stretch reads GTQSTQILANGKPLSSNHKQRTPYCSSSESQPLQ. Residues 276–285 show a composition bias toward pro residues; the sequence is GPPPPKPSRP. A compositionally biased stretch (basic and acidic residues) spans 377 to 390; it reads SAKHEDKKMKEKQP. A Phosphotyrosine modification is found at Y491. Residues 521-524 carry the SH2-binding; to LCP2 motif; the sequence is YEDV. Y587 carries the post-translational modification Phosphotyrosine. The 61-residue stretch at 664–724 folds into the SH3 domain; the sequence is IVINTAVACS…LIEHLDFKHQ (61 aa).

Interacts with SKAP1, LCK and FYN. The phosphorylated form interacts with LCP2. In terms of processing, phosphorylation is required for its function in T-cell activation. In terms of tissue distribution, expressed in T-cells (at protein level). Widely expressed.

It localises to the membrane raft. Its function is as follows. Adapter protein that plays a role in T-cell receptor (TCR)-mediated activation of signaling pathways. Required for T-cell activation and integrin-mediated T-cell adhesion in response to TCR stimulation. The chain is FYN-binding protein 2 from Homo sapiens (Human).